Consider the following 59-residue polypeptide: MVLTNLQKITGLLCVLVETKKLKIFIKFMLKTKNGGKKVLKKIYKKAKKKNILTMIMFI.

This is an uncharacterized protein from Acheta domesticus (House cricket).